Reading from the N-terminus, the 26-residue chain is Beta-hexosaminidase (26 aa).

Glycosylated. Detected in dry seeds and cotyledons.

It carries out the reaction Hydrolysis of terminal non-reducing N-acetyl-D-hexosamine residues in N-acetyl-beta-D-hexosaminides.. With respect to regulation, inhibited by AgNO(3) at a concentration of 0.1 mM. Strongly inhibited by CdCl(2), ZnCl(2) and FeCl(3) and moderately by CoCl(2), CuSO(4) and NiCl(2) at 10 mM concentration. CaCl(2), MgCl(2), MnSO(4) and KI also have a slight inhibitory effect of 20%-25% at 10 mM concentration. Activated to a small extent by MgCl(2) at 0.1 mM concentration but inhibited with increasing concentration. Not affected by carbohydrates such as fucose, galactose and glucose but displays a slight decrease in activity up to 25% with lactose, alpha-mannose and N-acetyl-galactosamine (GalNAc). Its function is as follows. Has hexosaminidase activity. Active with both p-nitrophenyl-beta-D-N-acetylglucosamine (pNP-GlcNAc) and p-nitrophenyl-beta-D-N-acetylgalactosamine (pNP-GalNAc). Not active toward p-nitrophenyl-beta-D-N,N'-diacetylchitobiose (pNP-(GlcNAc)2) or p-nitrophenyl-beta-D-N,N',N''-triacetylchitobiose (pNP-(GlcNAc)3). Removes terminal GlcNAc and may be involved in storage protein degradation. The chain is Beta-hexosaminidase from Lupinus albus (White lupine).